The chain runs to 568 residues: 2-succinyl-5-enolpyruvyl-6-hydroxy-3-cyclohexene-1-carboxylate synthase (568 aa).

This sequence belongs to the TPP enzyme family. MenD subfamily. In terms of assembly, homodimer. The cofactor is Mg(2+). Mn(2+) is required as a cofactor. Requires thiamine diphosphate as cofactor.

It carries out the reaction isochorismate + 2-oxoglutarate + H(+) = 5-enolpyruvoyl-6-hydroxy-2-succinyl-cyclohex-3-ene-1-carboxylate + CO2. The protein operates within quinol/quinone metabolism; 1,4-dihydroxy-2-naphthoate biosynthesis; 1,4-dihydroxy-2-naphthoate from chorismate: step 2/7. It functions in the pathway quinol/quinone metabolism; menaquinone biosynthesis. Catalyzes the thiamine diphosphate-dependent decarboxylation of 2-oxoglutarate and the subsequent addition of the resulting succinic semialdehyde-thiamine pyrophosphate anion to isochorismate to yield 2-succinyl-5-enolpyruvyl-6-hydroxy-3-cyclohexene-1-carboxylate (SEPHCHC). The polypeptide is 2-succinyl-5-enolpyruvyl-6-hydroxy-3-cyclohexene-1-carboxylate synthase (Actinobacillus pleuropneumoniae serotype 3 (strain JL03)).